Here is a 340-residue protein sequence, read N- to C-terminus: Glycerol-3-phosphate dehydrogenase [NAD(P)+] (340 aa).

NADPH contacts are provided by Ser15, Tyr16, His36, and Lys110. Lys110, Gly139, and Thr141 together coordinate sn-glycerol 3-phosphate. Ala143 lines the NADPH pocket. Residues Lys196, Asp249, Ser259, Arg260, and Asn261 each contribute to the sn-glycerol 3-phosphate site. Catalysis depends on Lys196, which acts as the Proton acceptor. Arg260 is a binding site for NADPH. 2 residues coordinate NADPH: Val284 and Glu286.

This sequence belongs to the NAD-dependent glycerol-3-phosphate dehydrogenase family.

It localises to the cytoplasm. It carries out the reaction sn-glycerol 3-phosphate + NAD(+) = dihydroxyacetone phosphate + NADH + H(+). The catalysed reaction is sn-glycerol 3-phosphate + NADP(+) = dihydroxyacetone phosphate + NADPH + H(+). The protein operates within membrane lipid metabolism; glycerophospholipid metabolism. Functionally, catalyzes the reduction of the glycolytic intermediate dihydroxyacetone phosphate (DHAP) to sn-glycerol 3-phosphate (G3P), the key precursor for phospholipid synthesis. This is Glycerol-3-phosphate dehydrogenase [NAD(P)+] from Serratia marcescens.